A 274-amino-acid polypeptide reads, in one-letter code: NADPH-dependent 7-cyano-7-deazaguanine reductase (274 aa).

Positions 1-33 (MPKKDALDHLSLGQHTDYPNEYDPKQLQPVPRS) are disordered. 84-86 (IES) contacts substrate. 86–87 (SK) lines the NADPH pocket. The Thioimide intermediate role is filled by Cys183. Residue Asp190 is the Proton donor of the active site. 222 to 223 (HE) lines the substrate pocket. Residue 250–251 (RG) participates in NADPH binding.

This sequence belongs to the GTP cyclohydrolase I family. QueF type 2 subfamily. As to quaternary structure, homodimer.

It localises to the cytoplasm. It catalyses the reaction 7-aminomethyl-7-carbaguanine + 2 NADP(+) = 7-cyano-7-deazaguanine + 2 NADPH + 3 H(+). The protein operates within tRNA modification; tRNA-queuosine biosynthesis. In terms of biological role, catalyzes the NADPH-dependent reduction of 7-cyano-7-deazaguanine (preQ0) to 7-aminomethyl-7-deazaguanine (preQ1). This chain is NADPH-dependent 7-cyano-7-deazaguanine reductase, found in Idiomarina loihiensis (strain ATCC BAA-735 / DSM 15497 / L2-TR).